We begin with the raw amino-acid sequence, 235 residues long: Probable transcriptional regulatory protein JJD26997_0557 (235 aa).

The protein belongs to the TACO1 family.

The protein localises to the cytoplasm. This Campylobacter jejuni subsp. doylei (strain ATCC BAA-1458 / RM4099 / 269.97) protein is Probable transcriptional regulatory protein JJD26997_0557.